A 237-amino-acid chain; its full sequence is Ubiquinone biosynthesis O-methyltransferase (237 aa).

Residues R38, G58, D79, and M124 each contribute to the S-adenosyl-L-methionine site.

The protein belongs to the methyltransferase superfamily. UbiG/COQ3 family.

The catalysed reaction is a 3-demethylubiquinol + S-adenosyl-L-methionine = a ubiquinol + S-adenosyl-L-homocysteine + H(+). The enzyme catalyses a 3-(all-trans-polyprenyl)benzene-1,2-diol + S-adenosyl-L-methionine = a 2-methoxy-6-(all-trans-polyprenyl)phenol + S-adenosyl-L-homocysteine + H(+). Its pathway is cofactor biosynthesis; ubiquinone biosynthesis. Functionally, O-methyltransferase that catalyzes the 2 O-methylation steps in the ubiquinone biosynthetic pathway. This is Ubiquinone biosynthesis O-methyltransferase from Acinetobacter baumannii (strain ACICU).